An 83-amino-acid chain; its full sequence is Translational regulator CsrA (83 aa).

This sequence belongs to the CsrA/RsmA family. As to quaternary structure, homodimer; the beta-strands of each monomer intercalate to form a hydrophobic core, while the alpha-helices form wings that extend away from the core.

It localises to the cytoplasm. Functionally, a translational regulator that binds mRNA to regulate translation initiation and/or mRNA stability. Usually binds in the 5'-UTR at or near the Shine-Dalgarno sequence preventing ribosome-binding, thus repressing translation. Its main target seems to be the major flagellin gene, while its function is anatagonized by FliW. The sequence is that of Translational regulator CsrA from Nocardioides sp. (strain ATCC BAA-499 / JS614).